We begin with the raw amino-acid sequence, 464 residues long: MGTIYLFRKTQRSLLGKLAQEFRLVTADRRSWKILLFGAINVVCTAFLLTWCSSTNSMALTAYTYLTIFDLFSLITSLISYWVTMKKPSPTYSFGFERFEVLAVFASTVLAQLGALFILKESAERFIEQPEIHTGRLLVGTFVALFFNLFTMLSIRNKPFAYVSDAASTSWLQEHVADLSRSLCGIIPGLSSIFLPRMNPFVLIDIAGALALCITYMLIEINNYFAVDTASAVAIAVMTFGTMYPMSVYSGKVLLQTTPPHVIGQLDKLLREVSTLDGVLEVRNEHFWTLGFGTMAGSVHVRIRRDANEQMVLAHVTNRLSTLVSTLTVQIFKDDWARPVLASGTMPPNMLNIPEHHVIQMPSLKSTIDELNPLTSTPSKPSSPPPEFAFNTPGKNMNPVILSNNQMRPFGVGYNYGTTPYTTTFNQGLGVPGVGNTQGLRTGLTNVANRYGTYTPGQFTQFRQ.

Over 1–33 (MGTIYLFRKTQRSLLGKLAQEFRLVTADRRSWK) the chain is Cytoplasmic. The chain crosses the membrane as a helical span at residues 34-54 (ILLFGAINVVCTAFLLTWCSS). The Extracellular portion of the chain corresponds to 55–64 (TNSMALTAYT). Residues 65–85 (YLTIFDLFSLITSLISYWVTM) form a helical membrane-spanning segment. At 86-98 (KKPSPTYSFGFER) the chain is on the cytoplasmic side. The chain crosses the membrane as a helical span at residues 99–119 (FEVLAVFASTVLAQLGALFIL). At 120–134 (KESAERFIEQPEIHT) the chain is on the extracellular side. A helical transmembrane segment spans residues 135-155 (GRLLVGTFVALFFNLFTMLSI). Residues 156 to 200 (RNKPFAYVSDAASTSWLQEHVADLSRSLCGIIPGLSSIFLPRMNP) lie on the Cytoplasmic side of the membrane. Residues 201–221 (FVLIDIAGALALCITYMLIEI) traverse the membrane as a helical segment. The Extracellular segment spans residues 222-223 (NN). Residues 224 to 244 (YFAVDTASAVAIAVMTFGTMY) traverse the membrane as a helical segment. The Cytoplasmic segment spans residues 245–464 (PMSVYSGKVL…TPGQFTQFRQ (220 aa)).

Belongs to the cation diffusion facilitator (CDF) transporter (TC 2.A.4) family. SLC30A subfamily. Heterodimer with SLC30A5; form a functional zinc ion transmembrane transporter.

It is found in the golgi apparatus. Its subcellular location is the trans-Golgi network membrane. In terms of biological role, has probably no intrinsic transporter activity but together with SLC30A5 forms a functional zinc ion:proton antiporter heterodimer, mediating zinc entry into the lumen of organelles along the secretory pathway. As part of that zinc ion:proton antiporter, contributes to zinc ion homeostasis within the early secretory pathway and regulates the activation and folding of enzymes like alkaline phosphatases and enzymes involved in phosphatidylinositol glycan anchor biosynthesis. The sequence is that of Zinc transporter 6-A (slc30a6-a) from Xenopus laevis (African clawed frog).